The following is a 128-amino-acid chain: S-protein homolog 5 (128 aa).

The N-terminal stretch at 1 to 20 (MEKVSIVCFFFFLLFGSGYG) is a signal peptide.

It belongs to the plant self-incompatibility (S1) protein family.

It is found in the secreted. This Arabidopsis thaliana (Mouse-ear cress) protein is S-protein homolog 5.